Reading from the N-terminus, the 277-residue chain is Protein EURL homolog (277 aa).

Positions 173-201 (LGLWPGERPQNREQRDSRQRRHSGHSREE) are disordered. A coiled-coil region spans residues 197–229 (HSREELMRKNVEELRQLNEQLLLQIQNVFEELS).

Belongs to the EURL family.

Plays a role in cortical progenitor cell proliferation and differentiation. May promote dendritic spine development of post-migratory cortical projection neurons by modulating the beta-catenin signaling pathway. The protein is Protein EURL homolog of Danio rerio (Zebrafish).